A 169-amino-acid polypeptide reads, in one-letter code: MAQGDDNKQAIGQIIRQEQALIFPSLDENDAFSLGQRIRDIAVKDKLGIAIDISLWGRRLFFAATAGATADNTEWLRRKFNVVRRFHVSTYRLVLEQNREDRMFAPYKALDVADYALAGGGFPIRVSGAGVIGAVIVSGLPQREDHNLVVRAVAEHVGQDPVALALPAA.

It belongs to the UPF0303 family.

The polypeptide is UPF0303 protein BMEI0598 (Brucella melitensis biotype 1 (strain ATCC 23456 / CCUG 17765 / NCTC 10094 / 16M)).